The chain runs to 97 residues: Exodeoxyribonuclease 7 small subunit (97 aa).

The tract at residues 1 to 22 (MAKTASPGATPPGNGTEPLPDN) is disordered.

It belongs to the XseB family. Heterooligomer composed of large and small subunits.

The protein localises to the cytoplasm. The enzyme catalyses Exonucleolytic cleavage in either 5'- to 3'- or 3'- to 5'-direction to yield nucleoside 5'-phosphates.. Its function is as follows. Bidirectionally degrades single-stranded DNA into large acid-insoluble oligonucleotides, which are then degraded further into small acid-soluble oligonucleotides. This Burkholderia cenocepacia (strain HI2424) protein is Exodeoxyribonuclease 7 small subunit.